The chain runs to 644 residues: Threonine--tRNA ligase (644 aa).

A TGS domain is found at 1–62 (MSFSITLPDG…DSDSEVAIIT (62 aa)). Residues 240-538 (DHRTIGRDLD…LTEIYKGAFP (299 aa)) are catalytic. Residues cysteine 334, histidine 385, and histidine 515 each coordinate Zn(2+).

The protein belongs to the class-II aminoacyl-tRNA synthetase family. As to quaternary structure, homodimer. It depends on Zn(2+) as a cofactor.

The protein localises to the cytoplasm. The enzyme catalyses tRNA(Thr) + L-threonine + ATP = L-threonyl-tRNA(Thr) + AMP + diphosphate + H(+). In terms of biological role, catalyzes the attachment of threonine to tRNA(Thr) in a two-step reaction: L-threonine is first activated by ATP to form Thr-AMP and then transferred to the acceptor end of tRNA(Thr). Also edits incorrectly charged L-seryl-tRNA(Thr). The polypeptide is Threonine--tRNA ligase (Lactobacillus helveticus (strain DPC 4571)).